The chain runs to 386 residues: Erythronate-4-phosphate dehydrogenase (386 aa).

Residues serine 59 and threonine 81 each coordinate substrate. Residue aspartate 162 participates in NAD(+) binding. Arginine 239 is an active-site residue. Aspartate 262 contacts NAD(+). Residue glutamate 267 is part of the active site. The Proton donor role is filled by histidine 284. Glycine 287 contributes to the NAD(+) binding site. Tyrosine 288 provides a ligand contact to substrate.

The protein belongs to the D-isomer specific 2-hydroxyacid dehydrogenase family. PdxB subfamily. As to quaternary structure, homodimer.

It localises to the cytoplasm. It carries out the reaction 4-phospho-D-erythronate + NAD(+) = (R)-3-hydroxy-2-oxo-4-phosphooxybutanoate + NADH + H(+). It participates in cofactor biosynthesis; pyridoxine 5'-phosphate biosynthesis; pyridoxine 5'-phosphate from D-erythrose 4-phosphate: step 2/5. Catalyzes the oxidation of erythronate-4-phosphate to 3-hydroxy-2-oxo-4-phosphonooxybutanoate. The sequence is that of Erythronate-4-phosphate dehydrogenase from Psychrobacter cryohalolentis (strain ATCC BAA-1226 / DSM 17306 / VKM B-2378 / K5).